The sequence spans 279 residues: Estrogen receptor beta (279 aa).

The 235-residue stretch at 27-261 (SPEQLVLTLL…DLLLEMLNAH (235 aa)) folds into the NR LBD domain.

The protein belongs to the nuclear hormone receptor family. NR3 subfamily. In terms of assembly, binds DNA as a homodimer. Can form a heterodimer with ESR1. Interacts with NCOA1, NCOA3, NCOA5 and NCOA6 coactivators, leading to a strong increase of transcription of target genes. Interacts with UBE1C and AKAP13. Interacts with DNTTIP2. Interacts with CCDC62 in the presence of estradiol/E2; this interaction seems to enhance the transcription of target genes. Interacts with DNAAF4. Interacts with PRMT2. Interacts with CCAR2 (via N-terminus) in a ligand-independent manner. Interacts with RBM39, in the presence of estradiol (E2). Interacts with STUB1/CHIP.

The protein localises to the nucleus. Functionally, nuclear hormone receptor. Binds estrogens with an affinity similar to that of ESR1/ER-alpha, and activates expression of reporter genes containing estrogen response elements (ERE) in an estrogen-dependent manner. In Macaca mulatta (Rhesus macaque), this protein is Estrogen receptor beta (ESR2).